We begin with the raw amino-acid sequence, 284 residues long: Proteasome subunit pbs-5 (284 aa).

A propeptide spans 1-64 (removed in mature form); it reads MWGETFDDFE…AGKSMQFRKG (64 aa). The Nucleophile role is filled by threonine 65.

Belongs to the peptidase T1B family. The 26S proteasome consists of a 20S proteasome core and two 19S regulatory subunits. The 20S proteasome core is composed of 28 subunits that are arranged in four stacked rings, resulting in a barrel-shaped structure. The two end rings are each formed by seven alpha subunits, and the two central rings are each formed by seven beta subunits. The catalytic chamber with the active sites is on the inside of the barrel.

The protein localises to the cytoplasm. It is found in the nucleus. It catalyses the reaction Cleavage of peptide bonds with very broad specificity.. Its function is as follows. Component of the 20S core proteasome complex involved in the proteolytic degradation of most intracellular proteins. This complex plays numerous essential roles within the cell by associating with different regulatory particles. Associated with two 19S regulatory particles, forms the 26S proteasome and thus participates in the ATP-dependent degradation of ubiquitinated proteins. The 26S proteasome plays a key role in the maintenance of protein homeostasis by removing misfolded or damaged proteins that could impair cellular functions, and by removing proteins whose functions are no longer required. This is Proteasome subunit pbs-5 from Caenorhabditis elegans.